Here is a 308-residue protein sequence, read N- to C-terminus: Cytochrome b (308 aa).

4 helical membrane-spanning segments follow: residues 1–21 (FGSL…LLAT), 45–66 (WLIR…YLHI), 81–101 (WNTG…GYVL), and 146–166 (FFAL…IHFT). His65 is a binding site for heme b. Heme b is bound by residues His150 and His164. Residue His169 participates in a ubiquinone binding. A run of 3 helical transmembrane segments spans residues 194–214 (VKDI…ALFS), 256–276 (LGGV…PFLH), and 288–308 (LSQF…WVGS).

Belongs to the cytochrome b family. In terms of assembly, the cytochrome bc1 complex contains 11 subunits: 3 respiratory subunits (MT-CYB, CYC1 and UQCRFS1), 2 core proteins (UQCRC1 and UQCRC2) and 6 low-molecular weight proteins (UQCRH/QCR6, UQCRB/QCR7, UQCRQ/QCR8, UQCR10/QCR9, UQCR11/QCR10 and a cleavage product of UQCRFS1). This cytochrome bc1 complex then forms a dimer. Heme b serves as cofactor.

The protein resides in the mitochondrion inner membrane. Functionally, component of the ubiquinol-cytochrome c reductase complex (complex III or cytochrome b-c1 complex) that is part of the mitochondrial respiratory chain. The b-c1 complex mediates electron transfer from ubiquinol to cytochrome c. Contributes to the generation of a proton gradient across the mitochondrial membrane that is then used for ATP synthesis. In Colaptes rupicola (Southern Andean flicker), this protein is Cytochrome b (MT-CYB).